Consider the following 222-residue polypeptide: Small ribosomal subunit protein uS3 (222 aa).

One can recognise a KH type-2 domain in the interval 39–107 (VREFLHKKLA…PVQINIEEVR (69 aa)).

It belongs to the universal ribosomal protein uS3 family. In terms of assembly, part of the 30S ribosomal subunit. Forms a tight complex with proteins S10 and S14.

In terms of biological role, binds the lower part of the 30S subunit head. Binds mRNA in the 70S ribosome, positioning it for translation. The polypeptide is Small ribosomal subunit protein uS3 (Francisella tularensis subsp. tularensis (strain FSC 198)).